A 232-amino-acid chain; its full sequence is Izumo sperm-egg fusion protein 4 (232 aa).

The first 15 residues, 1 to 15, serve as a signal peptide directing secretion; it reads MALLLCLVCLTAALA. 2 N-linked (GlcNAc...) asparagine glycosylation sites follow: Asn24 and Asn219.

The protein belongs to the Izumo family. As to expression, detected in sperm.

It localises to the secreted. The chain is Izumo sperm-egg fusion protein 4 (IZUMO4) from Homo sapiens (Human).